Here is a 333-residue protein sequence, read N- to C-terminus: Phosphate acyltransferase (333 aa).

This sequence belongs to the PlsX family. As to quaternary structure, homodimer. Probably interacts with PlsY.

The protein localises to the cytoplasm. It catalyses the reaction a fatty acyl-[ACP] + phosphate = an acyl phosphate + holo-[ACP]. Its pathway is lipid metabolism; phospholipid metabolism. Its function is as follows. Catalyzes the reversible formation of acyl-phosphate (acyl-PO(4)) from acyl-[acyl-carrier-protein] (acyl-ACP). This enzyme utilizes acyl-ACP as fatty acyl donor, but not acyl-CoA. The sequence is that of Phosphate acyltransferase from Desulforamulus reducens (strain ATCC BAA-1160 / DSM 100696 / MI-1) (Desulfotomaculum reducens).